The sequence spans 671 residues: Anti-sigma-I factor RsgI2 (671 aa).

Residues 1 to 57 lie on the Cytoplasmic side of the membrane; sequence MSHYTGIILKLESDRAIVLTDGLDFMELKLKPGMQRGQHVIFDESDLYSAGLITRYK. Residues 4 to 51 enclose the RsgI N-terminal anti-sigma domain; the sequence is YTGIILKLESDRAIVLTDGLDFMELKLKPGMQRGQHVIFDESDLYSAG. The helical transmembrane segment at 58 to 78 threads the bilayer; sequence SIIMPFSAFAAAAAVFLVILF. The Extracellular segment spans residues 79 to 671; sequence SLRFVSISQE…SGTLYWGIEP (593 aa). Disordered regions lie at residues 290–323 and 359–505; these read TEAQ…IPHT and PVPV…APTE. The segment covering 359–379 has biased composition (low complexity); that stretch reads PVPVSTPKPVSTPAYSSTPTP. A compositionally biased stretch (pro residues) spans 380–400; that stretch reads ESTPVPVSTPKPASTPTPAST. Over residues 401–425 the composition is skewed to low complexity; it reads PKPVSTPTHVSTPKPISTPTSTPRP. Positions 426-446 are enriched in pro residues; that stretch reads ASTPKPTSTPTPESTPKPTST. The segment covering 447–491 has biased composition (low complexity); that stretch reads PAPVSTPTSTPIPTYTSTPASTPIPAYTSTPTSIPTLTPATSPAP. Pro residues predominate over residues 492-502; the sequence is TSSPTPIPSPA. The CBM3 domain maps to 508-671; sequence LLTKIELQAY…SGTLYWGIEP (164 aa). Residues Thr554, Asp556, Asp637, Ser640, and Asp641 each coordinate Ca(2+).

As to quaternary structure, interacts (via RsgI N-terminal anti-sigma domain) with SigI2.

It is found in the cell membrane. Anti-sigma factor for SigI2. Negatively regulates SigI2 activity through direct interaction. Binding of the polysaccharide substrate to the extracellular C-terminal sensing domain of RsgI2 may induce a conformational change in its N-terminal cytoplasmic region, leading to the release and activation of SigI2. The protein is Anti-sigma-I factor RsgI2 of Acetivibrio thermocellus (strain ATCC 27405 / DSM 1237 / JCM 9322 / NBRC 103400 / NCIMB 10682 / NRRL B-4536 / VPI 7372) (Clostridium thermocellum).